Here is a 611-residue protein sequence, read N- to C-terminus: UvrABC system protein C (611 aa).

One can recognise a GIY-YIG domain in the interval 6–84 (NNPGVYRMFN…IKRLRPRFNV (79 aa)). Residues 194–229 (QSVKDHLAAAMQAASADLDFEHAAVYRDRLAALSHV) form the UVR domain.

It belongs to the UvrC family. In terms of assembly, interacts with UvrB in an incision complex.

The protein localises to the cytoplasm. Functionally, the UvrABC repair system catalyzes the recognition and processing of DNA lesions. UvrC both incises the 5' and 3' sides of the lesion. The N-terminal half is responsible for the 3' incision and the C-terminal half is responsible for the 5' incision. This chain is UvrABC system protein C, found in Brucella abortus (strain 2308).